The chain runs to 38 residues: Toxin CSTX-16 (38 aa).

Glutamine amide occurs at positions 19 and 38.

It belongs to the cationic peptide 04 (cupiennin) family. 10 (double chain) subfamily. In terms of tissue distribution, expressed by the venom gland.

The protein localises to the secreted. The sequence is that of Toxin CSTX-16 from Cupiennius salei (American wandering spider).